The primary structure comprises 373 residues: Probable di-N-acetylchitobiase 1 (373 aa).

Residues 1 to 20 form the signal peptide; it reads MKIFIIISLILTILIIQSKS. Residues 21–369 form the GH18 domain; that stretch reads KECPCSNVEL…SGMWGALNSF (349 aa). Asparagine 48 carries an N-linked (GlcNAc...) asparagine glycan. Chitin is bound by residues 53 to 54 and 82 to 85; these read PY and NGVR. N-linked (GlcNAc...) asparagine glycosylation is present at asparagine 99. The active-site Proton donor is glutamate 127. Chitin contacts are provided by residues tyrosine 128 and 191 to 194; that span reads MDYD. Residues asparagine 222, asparagine 250, asparagine 269, asparagine 279, and asparagine 288 are each glycosylated (N-linked (GlcNAc...) asparagine). Tryptophan 347 lines the chitin pocket.

The protein belongs to the glycosyl hydrolase 18 family.

It is found in the lysosome. In terms of biological role, involved in the degradation of asparagine-linked glycoproteins. May hydrolyze of N-acetyl-beta-D-glucosamine (1-4)N-acetylglucosamine chitobiose core from the reducing end of the bond. This is Probable di-N-acetylchitobiase 1 (ctbs1) from Dictyostelium discoideum (Social amoeba).